The primary structure comprises 644 residues: ATP-dependent zinc metalloprotease FtsH (644 aa).

Over 1–4 (MAKN) the chain is Cytoplasmic. The chain crosses the membrane as a helical span at residues 5–25 (LILWLVIAVVLMSVFQSFGPS). The Periplasmic portion of the chain corresponds to 26 to 98 (ESNGRKVDYS…VGEPPEEPSL (73 aa)). The helical transmembrane segment at 99–119 (LASIFISWFPMLLLIGVWIFF) threads the bilayer. Over 120–644 (MRQMQGGGGK…NTMSEQLGDK (525 aa)) the chain is Cytoplasmic. ATP is bound at residue 192 to 199 (GPPGTGKT). A Zn(2+)-binding site is contributed by H414. E415 is a catalytic residue. Zn(2+) is bound by residues H418 and D492. The tract at residues 598–644 (VRPPAGWEEPGASNNSGDNGSPKAPRPVDEPRTPNPGNTMSEQLGDK) is disordered. Residues 632–644 (NPGNTMSEQLGDK) are compositionally biased toward polar residues.

This sequence in the central section; belongs to the AAA ATPase family. It in the C-terminal section; belongs to the peptidase M41 family. As to quaternary structure, homohexamer. Zn(2+) is required as a cofactor.

It is found in the cell inner membrane. In terms of biological role, acts as a processive, ATP-dependent zinc metallopeptidase for both cytoplasmic and membrane proteins. Plays a role in the quality control of integral membrane proteins. The chain is ATP-dependent zinc metalloprotease FtsH from Shigella flexneri.